The following is a 1984-amino-acid chain: Vitellogenin receptor Yl (1984 aa).

The span at 1-19 (MCQAEHQVHPSEQRIRVES) shows a compositional bias: basic and acidic residues. A disordered region spans residues 1–48 (MCQAEHQVHPSEQRIRVESPKMTASRRGFNLTSQTRAHPSSGGSTSSR). N30 carries an N-linked (GlcNAc...) asparagine glycan. A compositionally biased stretch (polar residues) spans 30-48 (NLTSQTRAHPSSGGSTSSR). LDL-receptor class A domains follow at residues 89 to 125 (RCDA…LDCD), 128 to 167 (LCRP…LNCP), 183 to 221 (SCSK…AGCK), 226 to 263 (TCPG…RGCL), and 265 to 305 (LCEP…DLCH). 20 disulfide bridges follow: C90/C102, C97/C115, C109/C124, C129/C144, C137/C157, C151/C166, C184/C197, C191/C210, C204/C220, C227/C239, C234/C253, C247/C262, C266/C281, C275/C294, C288/C304, C310/C321, C315/C331, C352/C363, C359/C372, and C374/C387. The 38-residue stretch at 306–343 (SKPDCDAKKCALGAKCHMMPASGAECFCPKGFRLAKFE) folds into the EGF-like 1 domain. Residues 348–388 (DVDECKEQDDLCSQGCENTSGGYRCVCDAGYLLDKDNRTCR) enclose the EGF-like 2; calcium-binding domain. 3 N-linked (GlcNAc...) asparagine glycosylation sites follow: N365, N384, and N429. LDL-receptor class B repeat units follow at residues 441–485 (SHIY…DWLT), 486–528 (QNIY…WPQK), 529–572 (GLMF…DMHQ), and 573–615 (QRIY…FEDQ). N-linked (GlcNAc...) asparagine glycosylation is found at N666, N749, and N782. LDL-receptor class B repeat units lie at residues 750–792 (GSLI…DHLS), 793–836 (RNLY…MPAE), 884–925 (QTIF…VHHD), and 934–940 (PRIYWTH). N-linked (GlcNAc...) asparagine glycosylation is present at N1022. LDL-receptor class A domains are found at residues 1024–1063 (TCVE…MNCD), 1073–1110 (LCSP…QHCE), 1117–1153 (KCHV…LLCE), 1157–1194 (RCEP…DKCV), and 1197–1233 (SCPP…LNCG). Intrachain disulfides connect C1025–C1040, C1035–C1053, C1047–C1062, C1074–C1087, C1081–C1100, C1094–C1109, C1118–C1130, C1125–C1143, C1137–C1152, C1158–C1170, C1165–C1183, C1177–C1193, C1198–C1210, C1205–C1223, and C1217–C1232. An N-linked (GlcNAc...) asparagine glycan is attached at N1240. 2 LDL-receptor class A domains span residues 1242-1280 (SCAE…ADCG) and 1282-1319 (VCSI…LSCE). 6 disulfides stabilise this stretch: C1243–C1257, C1250–C1270, C1264–C1279, C1283–C1296, C1290–C1309, and C1303–C1318. An N-linked (GlcNAc...) asparagine glycan is attached at N1265. N-linked (GlcNAc...) asparagine glycosylation occurs at N1326. Residues 1339-1376 (SCRPHLFDCQDGECVDLSRVCNNFPDCTNGHDEGPKCA) enclose the LDL-receptor class A 13 domain. 5 cysteine pairs are disulfide-bonded: C1340–C1352, C1347–C1365, C1359–C1375, C1422–C1432, and C1428–C1441. An EGF-like 3; calcium-binding domain is found at 1418–1453 (DIDECQEQQPCAQLCENTLGGYQCQCHADFMLRQDR). Residues N1475 and N1490 are each glycosylated (N-linked (GlcNAc...) asparagine). LDL-receptor class B repeat units follow at residues 1588 to 1637 (ARIF…DPHQ) and 1638 to 1687 (QLLY…YENN). A helical membrane pass occupies residues 1800-1820 (WLMALFVLAAGSLIAGLGYMY). Residues 1821–1984 (YQYRQRGHTD…GNDANARFVS (164 aa)) are Cytoplasmic-facing. Residue S1926 is modified to Phosphoserine. 2 disordered regions span residues 1927–1951 (KLHA…RQVP) and 1965–1984 (SAGQ…RFVS). A compositionally biased stretch (gly residues) spans 1932–1946 (DGGGAGGDGDGGRGV).

Belongs to the LDLR family. As to quaternary structure, interacts with osk (isoform A). Ovary.

The protein resides in the cell membrane. Its subcellular location is the cytoplasm. It localises to the cell cortex. The protein localises to the cytoplasmic vesicle. It is found in the clathrin-coated vesicle membrane. The protein resides in the early endosome membrane. Its subcellular location is the endosome. It localises to the multivesicular body lumen. Cell surface receptor involved in uptake of vitellogenins (yolk proteins) into developing oocytes by receptor-mediated endocytosis. May also mediate uptake of apolpp/apolipophorins and their incorporation into yolk granules. Along with its ligands, required for maintenance of microtubule plus-end orientation towards the posterior pole of oocytes. Involved in polarized localization of germ plasm components, such as osk mRNA and vas protein, to the oocyte posterior cortex. Receptor-mediated endocytosis of vitellogenin receptor ligands is critical for osk (isoform A) mediated actin reorganization and the anchoring of germ plasm components to the oocyte cortex. This Drosophila melanogaster (Fruit fly) protein is Vitellogenin receptor Yl.